An 83-amino-acid chain; its full sequence is uncharacterized protein (83 aa).

The next 2 helical transmembrane spans lie at 23–43 (FSLWFTHITFIGLFLMFQLIK) and 56–76 (TIFVVTCIIAILLWIIYCVFL).

The protein localises to the cell membrane. This is an uncharacterized protein from Bacillus subtilis (strain 168).